The primary structure comprises 158 residues: NAD(P)H-quinone oxidoreductase subunit J, chloroplastic (158 aa).

Belongs to the complex I 30 kDa subunit family. NDH is composed of at least 16 different subunits, 5 of which are encoded in the nucleus.

The protein resides in the plastid. It localises to the chloroplast thylakoid membrane. The enzyme catalyses a plastoquinone + NADH + (n+1) H(+)(in) = a plastoquinol + NAD(+) + n H(+)(out). It catalyses the reaction a plastoquinone + NADPH + (n+1) H(+)(in) = a plastoquinol + NADP(+) + n H(+)(out). Its function is as follows. NDH shuttles electrons from NAD(P)H:plastoquinone, via FMN and iron-sulfur (Fe-S) centers, to quinones in the photosynthetic chain and possibly in a chloroplast respiratory chain. The immediate electron acceptor for the enzyme in this species is believed to be plastoquinone. Couples the redox reaction to proton translocation, and thus conserves the redox energy in a proton gradient. This Guizotia abyssinica (Niger) protein is NAD(P)H-quinone oxidoreductase subunit J, chloroplastic.